Here is a 602-residue protein sequence, read N- to C-terminus: Trichothecene efflux pump TRI12 (602 aa).

4 helical membrane passes run 49–69 (LTLLSTYFAFEASAAAISFII), 77–97 (NVSLFSTVWTVSQSISILLMG), 107–127 (GFILGTNCVGIIGGIGCLYSF), and 134–154 (IGAQVLLGLAAGQPGACILFI). N160 carries N-linked (GlcNAc...) asparagine glycosylation. The next 11 membrane-spanning stretches (helical) occupy residues 164–184 (FLGNVIVAFPNVIATGFGPYI), 196–216 (WIFYIYIIITAVSTVLAFIFY), 240–260 (WIGAFFLTAGMTLFLLGVSWG), 271–291 (ILGLLISGIVSCVIFVLYECY), 297–317 (PIIPMEFFPGTFAGFGCMLLI), 355–375 (STAGFGIWAGIVTLGSLFHIF), 380–400 (WQLIFGSAWVTAFLGAMASVN), 408–428 (IAFSICTGFVIGWAEDVTMLL), 450–470 (AICGSIFTAAFISLYTIKFPG), 484–504 (WGFPGVLLVAGFAYWRALTGQ), and 532–552 (AAAYSYVYYFAMALGVIAIIA). Residue N590 is glycosylated (N-linked (GlcNAc...) asparagine).

The protein belongs to the major facilitator superfamily.

Its subcellular location is the cell membrane. In terms of biological role, efflux pump that provides the dual role of trichothecene export and self-protection by allowing the fungus to evade the harmful effect of its own trichothecene production. In Trichoderma arundinaceum, this protein is Trichothecene efflux pump TRI12.